A 187-amino-acid polypeptide reads, in one-letter code: Large ribosomal subunit protein uL18 (187 aa).

The protein belongs to the universal ribosomal protein uL18 family. Part of the 50S ribosomal subunit. Interacts with proteins L5 and L21e, and attaches the 5S rRNA to the 23S rRNA. Has been cross-linked to L21e.

Functionally, this is one of 5 proteins that mediate the attachment of the 5S rRNA onto the large ribosomal subunit, where it forms part of the central protuberance and stabilizes the orientation of adjacent RNA domains. The protein is Large ribosomal subunit protein uL18 (rpl18) of Haloarcula marismortui (strain ATCC 43049 / DSM 3752 / JCM 8966 / VKM B-1809) (Halobacterium marismortui).